Consider the following 2222-residue polypeptide: DNA polymerase epsilon catalytic subunit A (2222 aa).

Positions 90-110 are disordered; the sequence is ETLSSGSNGGGNSNDGERVTT. Residues cysteine 2108, cysteine 2111, cysteine 2130, and cysteine 2133 each contribute to the Zn(2+) site. The segment at 2108–2133 adopts a CysA-type zinc-finger fold; the sequence is CEYCFFISDIDFCKAAPESIFSCVRC. Residues cysteine 2164, cysteine 2167, cysteine 2179, and cysteine 2181 each coordinate [4Fe-4S] cluster. Positions 2164-2181 match the CysB motif motif; it reads CSRCHKVKRDYMSAHCPC.

This sequence belongs to the DNA polymerase type-B family. As to quaternary structure, DNA polymerase epsilon is a heterotetramer consisting of POL2, DPB2, DPB3 and DPB4. [4Fe-4S] cluster is required as a cofactor.

It localises to the nucleus. It catalyses the reaction DNA(n) + a 2'-deoxyribonucleoside 5'-triphosphate = DNA(n+1) + diphosphate. Its function is as follows. Catalytic component of the DNA polymerase epsilon complex which participates in chromosomal DNA replication. Required during synthesis of the leading DNA strands at the replication fork, binds at/or near replication origins and moves along DNA with the replication fork. Has 3'-5' proofreading exonuclease activity that corrects errors arising during DNA replication. The sequence is that of DNA polymerase epsilon catalytic subunit A (POL2) from Saccharomyces cerevisiae (strain ATCC 204508 / S288c) (Baker's yeast).